A 444-amino-acid chain; its full sequence is MRVLHLASEVFPFSRSGGLGDVLGALPAVQARLGEDAEVTVLSPWYASLQGEPQELWRGEAWGEQAWLGELRQDGVRYLFLGLNEFQRPGLYHPDDVERFCAFGRAALPALDAVGVTPDVLHGHDWQAGLVVAHARLRGLRTAFSVHNLQYQGRWNLHEAAGWTGLPDWTFGPDGVEFFGDLNLMKAGLNFAGHVTTVSPTYAQEITTPQYGEGLEGLLVRLTHEGRLSGILNGLDQDRWNPRTDPDIAAYSDPAGKAGAVKALRQEFGLDDAPILATVSRLADQKGMDLLITALPELVRDWNVVVLGGGDPLLEAALTGWANHPRVAFASGMNEPLAHRIYAGAHAFAMPSRFEPCGLSQLIAMRYGTLPIVRETGGLADTVPPEVGFRFADATAPAFLQACREAQAAFQDPAQWQTRATRAMSLDFSWDGPARQYLELYRGL.

Position 15 (arginine 15) interacts with ADP-alpha-D-glucose.

This sequence belongs to the glycosyltransferase 1 family. Bacterial/plant glycogen synthase subfamily.

It carries out the reaction [(1-&gt;4)-alpha-D-glucosyl](n) + ADP-alpha-D-glucose = [(1-&gt;4)-alpha-D-glucosyl](n+1) + ADP + H(+). Its pathway is glycan biosynthesis; glycogen biosynthesis. In terms of biological role, synthesizes alpha-1,4-glucan chains using ADP-glucose. This Deinococcus radiodurans (strain ATCC 13939 / DSM 20539 / JCM 16871 / CCUG 27074 / LMG 4051 / NBRC 15346 / NCIMB 9279 / VKM B-1422 / R1) protein is Glycogen synthase.